The primary structure comprises 137 residues: ATP synthase epsilon chain, sodium ion specific (137 aa).

This sequence belongs to the ATPase epsilon chain family. F-type ATPases have 2 components, CF(1) - the catalytic core - and CF(0) - the membrane proton channel. CF(1) has five subunits: alpha(3), beta(3), gamma(1), delta(1), epsilon(1). CF(0) has three main subunits: a, b and c.

The protein localises to the cell inner membrane. Functionally, produces ATP from ADP in the presence of a sodium gradient across the membrane. This is ATP synthase epsilon chain, sodium ion specific (atpC) from Propionigenium modestum.